Here is a 428-residue protein sequence, read N- to C-terminus: UDP-N-acetylglucosamine 1-carboxyvinyltransferase 2 (428 aa).

Phosphoenolpyruvate is bound at residue 22–23 (KN). R92 provides a ligand contact to UDP-N-acetyl-alpha-D-glucosamine. The active-site Proton donor is C116. Position 116 is a 2-(S-cysteinyl)pyruvic acid O-phosphothioketal (C116). UDP-N-acetyl-alpha-D-glucosamine-binding positions include 121–125 (RPIDQ), D304, and I326.

This sequence belongs to the EPSP synthase family. MurA subfamily.

The protein resides in the cytoplasm. The catalysed reaction is phosphoenolpyruvate + UDP-N-acetyl-alpha-D-glucosamine = UDP-N-acetyl-3-O-(1-carboxyvinyl)-alpha-D-glucosamine + phosphate. The protein operates within cell wall biogenesis; peptidoglycan biosynthesis. Functionally, cell wall formation. Adds enolpyruvyl to UDP-N-acetylglucosamine. The polypeptide is UDP-N-acetylglucosamine 1-carboxyvinyltransferase 2 (Oceanobacillus iheyensis (strain DSM 14371 / CIP 107618 / JCM 11309 / KCTC 3954 / HTE831)).